The chain runs to 312 residues: Mas-related G-protein coupled receptor member B3 (312 aa).

At 1–31 (MALRTSLITTTAPDKTSLPISICIIKFQVMN) the chain is on the extracellular side. A helical membrane pass occupies residues 32–52 (LLSITISPVGMVLNIIVLWFL). The Cytoplasmic segment spans residues 53–67 (GFQICRNAFSAYILN). A helical membrane pass occupies residues 68–88 (LAVADFLFLCSHSIFSFLIVC). Residues 89–106 (KLHYFLFYIRQLLDTVTM) are Extracellular-facing. A helical transmembrane segment spans residues 107-127 (FAYVFGLSITTIISIECCLSI). Residues 128–140 (MWPIWYHCQRPRH) lie on the Cytoplasmic side of the membrane. The helical transmembrane segment at 141–161 (TSAVICVLLWALSLLFPALQM) threads the bilayer. Residues 162–180 (EKCSVLFNTFEYSWCGIIN) are Extracellular-facing. A helical transmembrane segment spans residues 181-201 (IISGAWLVVLFVVLCGFSLIL). The Cytoplasmic segment spans residues 202–220 (LLRISCGSQQIPVTRLNVT). Residues 221-241 (IALRVLLLLIFGIPFGIFWIV) traverse the membrane as a helical segment. Residues 242 to 259 (DKWNEENFFVRACGFSHH) are Extracellular-facing. A helical membrane pass occupies residues 260 to 280 (ILYVYCINICVNATIYFLVGS). Residues 281-312 (IRHGKFQKMTLKLILQRAIQGTPEEEGGERGP) are Cytoplasmic-facing.

This sequence belongs to the G-protein coupled receptor 1 family. Mas subfamily.

Its subcellular location is the membrane. In terms of biological role, orphan receptor. Probably involved in the function of nociceptive neurons. May regulate nociceptor function and/or development, including the sensation or modulation of pain. In Mus musculus (Mouse), this protein is Mas-related G-protein coupled receptor member B3 (Mrgprb3).